A 247-amino-acid polypeptide reads, in one-letter code: Geranylgeranylglyceryl phosphate synthase (247 aa).

Mg(2+)-binding residues include Asp-23 and Ser-52. Residues 171-177 (YLEAGSG), 203-204 (GG), and 225-226 (GT) contribute to the sn-glycerol 1-phosphate site.

This sequence belongs to the GGGP/HepGP synthase family. Group II subfamily. Mg(2+) serves as cofactor.

Its subcellular location is the cytoplasm. The enzyme catalyses sn-glycerol 1-phosphate + (2E,6E,10E)-geranylgeranyl diphosphate = sn-3-O-(geranylgeranyl)glycerol 1-phosphate + diphosphate. It functions in the pathway membrane lipid metabolism; glycerophospholipid metabolism. Prenyltransferase that catalyzes the transfer of the geranylgeranyl moiety of geranylgeranyl diphosphate (GGPP) to the C3 hydroxyl of sn-glycerol-1-phosphate (G1P). This reaction is the first ether-bond-formation step in the biosynthesis of archaeal membrane lipids. The polypeptide is Geranylgeranylglyceryl phosphate synthase (Methanococcoides burtonii (strain DSM 6242 / NBRC 107633 / OCM 468 / ACE-M)).